A 289-amino-acid polypeptide reads, in one-letter code: Probable porphobilinogen deaminase (289 aa).

At Cys-233 the chain carries S-(dipyrrolylmethanemethyl)cysteine.

Belongs to the HMBS family. Dipyrromethane is required as a cofactor.

It carries out the reaction 4 porphobilinogen + H2O = hydroxymethylbilane + 4 NH4(+). It participates in porphyrin-containing compound metabolism; protoporphyrin-IX biosynthesis; coproporphyrinogen-III from 5-aminolevulinate: step 2/4. Tetrapolymerization of the monopyrrole PBG into the hydroxymethylbilane pre-uroporphyrinogen in several discrete steps. In Methanothermobacter thermautotrophicus (strain ATCC 29096 / DSM 1053 / JCM 10044 / NBRC 100330 / Delta H) (Methanobacterium thermoautotrophicum), this protein is Probable porphobilinogen deaminase (hemC).